A 152-amino-acid polypeptide reads, in one-letter code: Large ribosomal subunit protein bL9 (152 aa).

This sequence belongs to the bacterial ribosomal protein bL9 family.

Functionally, binds to the 23S rRNA. The chain is Large ribosomal subunit protein bL9 from Synechococcus sp. (strain RCC307).